Reading from the N-terminus, the 328-residue chain is Gonadotropin-releasing hormone receptor (328 aa).

Residues 1 to 38 (MANSDSPEQNENHCSAINSSIPLTPGSLPTLTLSGKIR) lie on the Extracellular side of the membrane. A glycan (N-linked (GlcNAc...) asparagine) is linked at asparagine 18. A helical transmembrane segment spans residues 39–58 (VTVTFFLFLLSTIFNTSFLL). Residues 59–77 (KLQNWTQRKEKRKKLSRMK) are Cytoplasmic-facing. Residues 78 to 97 (LLLKHLTLANLLETLIVMPL) form a helical membrane-spanning segment. Residues 98-115 (DGMWNITVQWYAGELLCK) lie on the Extracellular side of the membrane. N-linked (GlcNAc...) asparagine glycosylation occurs at asparagine 102. Cysteines 114 and 196 form a disulfide. A helical membrane pass occupies residues 116-137 (VLSYLKLFSMYAPAFMMVVISL). Topologically, residues 138 to 164 (DRSLAITKPLAVKSNSKLGQFMIGLAW) are cytoplasmic. Residues 165-184 (LLSSIFAGPQLYIFGMIHLA) form a helical membrane-spanning segment. The Extracellular segment spans residues 185 to 212 (DDSGQTEGFSQCVTHCSFPQWWHQAFYN). The chain crosses the membrane as a helical span at residues 213–232 (FFTFSCLFIIPLLIMVICNA). Over 233-281 (KIIFTLTRVLHQDPHKLQLNQSKNNIPRARLRTLKMTVAFATSFTVCWT) the chain is Cytoplasmic. A helical transmembrane segment spans residues 282-300 (PYYVLGIWYWFDPDMVNRV). Over 301 to 306 (SDPVNH) the chain is Extracellular. The chain crosses the membrane as a helical span at residues 307-326 (FFFLFAFLNPCFDPLIYGYF). Residues 327-328 (SL) lie on the Cytoplasmic side of the membrane.

It belongs to the G-protein coupled receptor 1 family.

It localises to the cell membrane. Receptor for gonadotropin releasing hormone (GnRH) that mediates the action of GnRH to stimulate the secretion of the gonadotropic hormones luteinizing hormone (LH) and follicle-stimulating hormone (FSH). This receptor mediates its action by association with G-proteins that activate a phosphatidylinositol-calcium second messenger system. In Bos taurus (Bovine), this protein is Gonadotropin-releasing hormone receptor (GNRHR).